Consider the following 55-residue polypeptide: Large ribosomal subunit protein bL33 (55 aa).

It belongs to the bacterial ribosomal protein bL33 family.

The sequence is that of Large ribosomal subunit protein bL33 from Vibrio atlanticus (strain LGP32) (Vibrio splendidus (strain Mel32)).